Consider the following 969-residue polypeptide: Endogenous retrovirus group K member 11 Pol protein (969 aa).

Residues Leu-57 to Ile-245 enclose the Reverse transcriptase domain. An LPQG motif is present at residues Leu-161–Gly-164. Residues Leu-460–Ile-590 enclose the RNase H type-1 domain. Positions 469, 497, 517, and 582 each coordinate Mg(2+). Residues Ser-587–Gln-628 form an Integrase-type zinc finger. His-596, His-600, Cys-624, and Cys-627 together coordinate Zn(2+). The Integrase catalytic domain occupies Arg-642–Lys-803. The integrase-type DNA-binding region spans Lys-811–Glu-859.

This sequence belongs to the beta type-B retroviral polymerase family. HERV class-II K(HML-2) pol subfamily.

It carries out the reaction DNA(n) + a 2'-deoxyribonucleoside 5'-triphosphate = DNA(n+1) + diphosphate. It catalyses the reaction Endonucleolytic cleavage to 5'-phosphomonoester.. In terms of biological role, early post-infection, the reverse transcriptase converts the viral RNA genome into double-stranded viral DNA. The RNase H domain of the reverse transcriptase performs two functions. It degrades the RNA template and specifically removes the RNA primer from the RNA/DNA hybrid. Following nuclear import, the integrase catalyzes the insertion of the linear, double-stranded viral DNA into the host cell chromosome. Endogenous Pol proteins may have kept, lost or modified their original function during evolution. The sequence is that of Endogenous retrovirus group K member 11 Pol protein (ERVK-11) from Homo sapiens (Human).